A 119-amino-acid chain; its full sequence is Large ribosomal subunit protein uL18 (119 aa).

This sequence belongs to the universal ribosomal protein uL18 family. Part of the 50S ribosomal subunit; part of the 5S rRNA/L5/L18/L25 subcomplex. Contacts the 5S and 23S rRNAs.

This is one of the proteins that bind and probably mediate the attachment of the 5S RNA into the large ribosomal subunit, where it forms part of the central protuberance. This is Large ribosomal subunit protein uL18 from Jannaschia sp. (strain CCS1).